A 325-amino-acid chain; its full sequence is Ferrochelatase (325 aa).

Fe cation contacts are provided by His-195 and Glu-276.

The protein belongs to the ferrochelatase family.

It localises to the cytoplasm. It carries out the reaction heme b + 2 H(+) = protoporphyrin IX + Fe(2+). It participates in porphyrin-containing compound metabolism; protoheme biosynthesis; protoheme from protoporphyrin-IX: step 1/1. Catalyzes the ferrous insertion into protoporphyrin IX. This Methylococcus capsulatus (strain ATCC 33009 / NCIMB 11132 / Bath) protein is Ferrochelatase.